Here is a 302-residue protein sequence, read N- to C-terminus: CRISPR-associated endonuclease Cas1 1 (302 aa).

Mn(2+) contacts are provided by E159, H219, and E234.

This sequence belongs to the CRISPR-associated endonuclease Cas1 family. As to quaternary structure, homodimer, forms a heterotetramer with a Cas2 homodimer. Mg(2+) is required as a cofactor. It depends on Mn(2+) as a cofactor.

Its function is as follows. CRISPR (clustered regularly interspaced short palindromic repeat), is an adaptive immune system that provides protection against mobile genetic elements (viruses, transposable elements and conjugative plasmids). CRISPR clusters contain spacers, sequences complementary to antecedent mobile elements, and target invading nucleic acids. CRISPR clusters are transcribed and processed into CRISPR RNA (crRNA). Acts as a dsDNA endonuclease. Involved in the integration of spacer DNA into the CRISPR cassette. The polypeptide is CRISPR-associated endonuclease Cas1 1 (Pyrobaculum aerophilum (strain ATCC 51768 / DSM 7523 / JCM 9630 / CIP 104966 / NBRC 100827 / IM2)).